The primary structure comprises 363 residues: tRNA N6-adenosine threonylcarbamoyltransferase (363 aa).

Fe cation-binding residues include histidine 127 and histidine 131. Substrate-binding positions include 150 to 154 (LISGG), aspartate 183, glycine 196, and asparagine 290. Fe cation is bound at residue aspartate 318.

This sequence belongs to the KAE1 / TsaD family. Requires Fe(2+) as cofactor.

Its subcellular location is the cytoplasm. The catalysed reaction is L-threonylcarbamoyladenylate + adenosine(37) in tRNA = N(6)-L-threonylcarbamoyladenosine(37) in tRNA + AMP + H(+). Its function is as follows. Required for the formation of a threonylcarbamoyl group on adenosine at position 37 (t(6)A37) in tRNAs that read codons beginning with adenine. Is involved in the transfer of the threonylcarbamoyl moiety of threonylcarbamoyl-AMP (TC-AMP) to the N6 group of A37, together with TsaE and TsaB. TsaD likely plays a direct catalytic role in this reaction. The chain is tRNA N6-adenosine threonylcarbamoyltransferase from Zymomonas mobilis subsp. mobilis (strain ATCC 31821 / ZM4 / CP4).